The sequence spans 355 residues: Homeobox protein knotted-1-like LET6 (355 aa).

The disordered stretch occupies residues 75–96 (PFMDNNNNNNPQEDNNSSSSSI). Over residues 79–96 (NNNNNNPQEDNNSSSSSI) the composition is skewed to low complexity. Positions 237 to 257 (ELKGQLLRKYSGYLGSLKQEF) constitute an ELK domain. The homeobox; TALE-type DNA-binding region spans 258 to 321 (MKKRKKGKLP…NQRKRHWKPS (64 aa)).

It belongs to the TALE/KNOX homeobox family. Expressed in developing lateral organs and developing ovaries in flowers.

It localises to the nucleus. Functionally, may have a role to play in formative events in ovule and embryo morphogenesis. Probably binds to the DNA sequence 5'-TGAC-3'. The polypeptide is Homeobox protein knotted-1-like LET6 (LET6) (Solanum lycopersicum (Tomato)).